Consider the following 378-residue polypeptide: Erythronate-4-phosphate dehydrogenase (378 aa).

Residues Ser-45 and Thr-66 each contribute to the substrate site. Positions 146 and 175 each coordinate NAD(+). Arg-208 is an active-site residue. Asp-232 serves as a coordination point for NAD(+). The active site involves Glu-237. The active-site Proton donor is His-254. Gly-257 lines the NAD(+) pocket. Residue Tyr-258 participates in substrate binding.

Belongs to the D-isomer specific 2-hydroxyacid dehydrogenase family. PdxB subfamily. Homodimer.

It is found in the cytoplasm. The enzyme catalyses 4-phospho-D-erythronate + NAD(+) = (R)-3-hydroxy-2-oxo-4-phosphooxybutanoate + NADH + H(+). It functions in the pathway cofactor biosynthesis; pyridoxine 5'-phosphate biosynthesis; pyridoxine 5'-phosphate from D-erythrose 4-phosphate: step 2/5. Functionally, catalyzes the oxidation of erythronate-4-phosphate to 3-hydroxy-2-oxo-4-phosphonooxybutanoate. This is Erythronate-4-phosphate dehydrogenase from Escherichia coli O6:K15:H31 (strain 536 / UPEC).